A 796-amino-acid polypeptide reads, in one-letter code: Inactive dipeptidyl peptidase 10 (796 aa).

Topologically, residues 1-34 (MNQTASVSHHIKCQPSKTIKELGSNSPPQRNWKG) are cytoplasmic. The mediates effects on KCND2 stretch occupies residues 1–55 (MNQTASVSHHIKCQPSKTIKELGSNSPPQRNWKGIAIALLVILVVCSLITMSVIL). Residues 35-55 (IAIALLVILVVCSLITMSVIL) form a helical; Signal-anchor for type II membrane protein membrane-spanning segment. Topologically, residues 56 to 796 (LTPDELTNSS…VLPQEPEEDE (741 aa)) are extracellular. Asparagine 63, asparagine 90, asparagine 111, and asparagine 119 each carry an N-linked (GlcNAc...) asparagine glycan. Tyrosine 138 and tyrosine 143 each carry phosphotyrosine. 3 N-linked (GlcNAc...) asparagine glycosylation sites follow: asparagine 257, asparagine 342, and asparagine 748.

Belongs to the peptidase S9B family. DPPIV subfamily. In terms of assembly, may form oligomers. Interacts with KCND1. Interacts with KCND2. Identified in a complex with KCND2 and KCNIP3. N-glycosylation is important for cell surface expression, specially at Asn-257, which is crucial. In terms of tissue distribution, detected in brain cortex, hippocampus, thalamus and cerebellum Purkinje cells (at protein level).

It is found in the cell membrane. In terms of biological role, promotes cell surface expression of the potassium channel KCND2. Modulates the activity and gating characteristics of the potassium channel KCND2. Has no dipeptidyl aminopeptidase activity. This chain is Inactive dipeptidyl peptidase 10 (Dpp10), found in Rattus norvegicus (Rat).